An 83-amino-acid chain; its full sequence is MALSTRTQAACLLLLLLASLSSTTYLHQQMRQTTELQPLHGEESRADIAIPMQKRRKRDTNFPICIFCCKCCNNSQCGICCKT.

The signal sequence occupies residues 1 to 23; the sequence is MALSTRTQAACLLLLLLASLSST. Residues 24 to 53 constitute a propeptide that is removed on maturation; it reads TYLHQQMRQTTELQPLHGEESRADIAIPMQ. 4 cysteine pairs are disulfide-bonded: cysteine 65–cysteine 81, cysteine 68–cysteine 71, cysteine 69–cysteine 77, and cysteine 72–cysteine 80.

Belongs to the hepcidin family. In terms of assembly, interacts with SLC40A1; this interaction promotes SLC40A1 rapid ubiquitination. In terms of tissue distribution, highly expressed in the liver and to a much lesser extent in the heart. Secreted in blood.

The protein localises to the secreted. In terms of biological role, liver-produced hormone that constitutes the main circulating regulator of iron absorption and distribution across tissues. Acts by promoting endocytosis and degradation of SLC40A1, leading to the retention of iron in iron-exporting cells and decreased flow of iron into plasma. Controls the major flows of iron into plasma: absorption of dietary iron in the intestine, recycling of iron by macrophages, which phagocytose old erythrocytes and other cells, and mobilization of stored iron from hepatocytes. The polypeptide is Hepcidin (Hamp) (Mus musculus (Mouse)).